A 247-amino-acid polypeptide reads, in one-letter code: Adenosylcobinamide-GDP ribazoletransferase (247 aa).

A run of 6 helical transmembrane segments spans residues 31–51 (ILFY…VTCI), 55–75 (LPAL…TGGL), 109–129 (IGVL…YVLI), 135–155 (LFLI…FLTT), 183–203 (VLLL…SFLI), and 227–247 (AIEI…FYLV).

The protein belongs to the CobS family. Mg(2+) is required as a cofactor.

It is found in the cell inner membrane. The enzyme catalyses alpha-ribazole + adenosylcob(III)inamide-GDP = adenosylcob(III)alamin + GMP + H(+). It carries out the reaction alpha-ribazole 5'-phosphate + adenosylcob(III)inamide-GDP = adenosylcob(III)alamin 5'-phosphate + GMP + H(+). Its pathway is cofactor biosynthesis; adenosylcobalamin biosynthesis; adenosylcobalamin from cob(II)yrinate a,c-diamide: step 7/7. In terms of biological role, joins adenosylcobinamide-GDP and alpha-ribazole to generate adenosylcobalamin (Ado-cobalamin). Also synthesizes adenosylcobalamin 5'-phosphate from adenosylcobinamide-GDP and alpha-ribazole 5'-phosphate. The polypeptide is Adenosylcobinamide-GDP ribazoletransferase (Acinetobacter baumannii (strain ACICU)).